A 105-amino-acid chain; its full sequence is Iron-sulfur cluster assembly protein CyaY (105 aa).

The protein belongs to the frataxin family.

Its function is as follows. Involved in iron-sulfur (Fe-S) cluster assembly. May act as a regulator of Fe-S biogenesis. The sequence is that of Iron-sulfur cluster assembly protein CyaY from Photobacterium profundum (strain SS9).